A 403-amino-acid polypeptide reads, in one-letter code: Argininosuccinate synthase (403 aa).

10-18 (AYSGGLDTS) lines the ATP pocket. Tyr87 lines the L-citrulline pocket. Gly117 is an ATP binding site. Residues Thr119, Asn123, and Asp124 each contribute to the L-aspartate site. Residue Asn123 participates in L-citrulline binding. The L-citrulline site is built by Arg127, Ser175, Glu260, and Tyr272.

Belongs to the argininosuccinate synthase family. Type 1 subfamily. As to quaternary structure, homotetramer.

The protein resides in the cytoplasm. It catalyses the reaction L-citrulline + L-aspartate + ATP = 2-(N(omega)-L-arginino)succinate + AMP + diphosphate + H(+). It participates in amino-acid biosynthesis; L-arginine biosynthesis; L-arginine from L-ornithine and carbamoyl phosphate: step 2/3. The protein is Argininosuccinate synthase of Bacillus velezensis (strain DSM 23117 / BGSC 10A6 / LMG 26770 / FZB42) (Bacillus amyloliquefaciens subsp. plantarum).